Here is a 358-residue protein sequence, read N- to C-terminus: Tripartite motif-containing protein 54 (358 aa).

The segment at 26 to 82 adopts an RING-type zinc-finger fold; that stretch reads CPICLEMFSKPVVILPCQHNLCRKCANDVFQASNPLWQSRGSTTVSSGGRFRCPSCR. A B box-type zinc finger spans residues 121 to 163; that stretch reads EQHLMCEEHEEEKINIYCLSCEVPTCSLCKVFGAHKDCEVAPL. 4 residues coordinate Zn(2+): Cys126, His129, Cys149, and His155. Residues 168–211 form a mediates microtubule-binding and homooligomerization region; it reads KRQKSELSDGIAMLVAGNDRVQAVITQMEEVCQTIEDNSRRQKQ. Residues 220-258 are a coiled coil; the sequence is LCAVLEERKGELLQALAREQEEKLQRVRGLIRQYGDHLE. One can recognise a COS domain in the interval 271–329; it reads MEEPQMALYLQQAKELINKVGAMSKVELAGRPEPGYESMEQFTVRVEHVAEMLRTIDFQ. The interval 326 to 358 is disordered; that stretch reads IDFQPGASGEEEEVAPDGEEGSAGPEEERPDGP. Over residues 334–345 the composition is skewed to acidic residues; the sequence is GEEEEVAPDGEE.

Homooligomer and heterooligomer. Interacts with tubulin. Interacts with TRIM63 and probably with TRIM55. Specifically expressed in heart and skeletal muscle.

It localises to the cytoplasm. It is found in the cytoskeleton. The protein localises to the myofibril. The protein resides in the sarcomere. Its subcellular location is the z line. In terms of biological role, may bind and stabilize microtubules during myotubes formation. The protein is Tripartite motif-containing protein 54 (TRIM54) of Homo sapiens (Human).